We begin with the raw amino-acid sequence, 144 residues long: Large ribosomal subunit protein uL15 (144 aa).

The segment at 1 to 44 is disordered; that stretch reads MKLNELMPSEGSRTNRKRIGRGTSSGTGKTAGRGQKGQKARGKV. The span at 23–35 shows a compositional bias: gly residues; that stretch reads TSSGTGKTAGRGQ.

The protein belongs to the universal ribosomal protein uL15 family. As to quaternary structure, part of the 50S ribosomal subunit.

Functionally, binds to the 23S rRNA. This Pediococcus pentosaceus (strain ATCC 25745 / CCUG 21536 / LMG 10740 / 183-1w) protein is Large ribosomal subunit protein uL15.